The sequence spans 876 residues: Alanine--tRNA ligase (876 aa).

Zn(2+)-binding residues include His565, His569, Cys667, and His671.

It belongs to the class-II aminoacyl-tRNA synthetase family. The cofactor is Zn(2+).

It localises to the cytoplasm. It carries out the reaction tRNA(Ala) + L-alanine + ATP = L-alanyl-tRNA(Ala) + AMP + diphosphate. Its function is as follows. Catalyzes the attachment of alanine to tRNA(Ala) in a two-step reaction: alanine is first activated by ATP to form Ala-AMP and then transferred to the acceptor end of tRNA(Ala). Also edits incorrectly charged Ser-tRNA(Ala) and Gly-tRNA(Ala) via its editing domain. This Desulfosudis oleivorans (strain DSM 6200 / JCM 39069 / Hxd3) (Desulfococcus oleovorans) protein is Alanine--tRNA ligase.